The chain runs to 390 residues: 1-deoxy-D-xylulose 5-phosphate reductoisomerase (390 aa).

NADPH contacts are provided by T18, G19, S20, I21, and N130. K131 provides a ligand contact to 1-deoxy-D-xylulose 5-phosphate. Residue E132 participates in NADPH binding. D156 is a binding site for Mn(2+). Residues S157, E158, S182, and H205 each coordinate 1-deoxy-D-xylulose 5-phosphate. E158 serves as a coordination point for Mn(2+). An NADPH-binding site is contributed by G211. The 1-deoxy-D-xylulose 5-phosphate site is built by S218, N223, K224, and E227. Mn(2+) is bound at residue E227.

Belongs to the DXR family. Mg(2+) serves as cofactor. Requires Mn(2+) as cofactor.

It carries out the reaction 2-C-methyl-D-erythritol 4-phosphate + NADP(+) = 1-deoxy-D-xylulose 5-phosphate + NADPH + H(+). It participates in isoprenoid biosynthesis; isopentenyl diphosphate biosynthesis via DXP pathway; isopentenyl diphosphate from 1-deoxy-D-xylulose 5-phosphate: step 1/6. Its function is as follows. Catalyzes the NADPH-dependent rearrangement and reduction of 1-deoxy-D-xylulose-5-phosphate (DXP) to 2-C-methyl-D-erythritol 4-phosphate (MEP). The protein is 1-deoxy-D-xylulose 5-phosphate reductoisomerase of Bacteroides thetaiotaomicron (strain ATCC 29148 / DSM 2079 / JCM 5827 / CCUG 10774 / NCTC 10582 / VPI-5482 / E50).